The following is a 144-amino-acid chain: Superoxide dismutase [Mn], mitochondrial (144 aa).

Residues His-10, His-58, and Asp-143 each contribute to the Mn(2+) site.

It belongs to the iron/manganese superoxide dismutase family. As to quaternary structure, homotetramer. The cofactor is Mn(2+).

The protein resides in the mitochondrion matrix. The enzyme catalyses 2 superoxide + 2 H(+) = H2O2 + O2. Its function is as follows. Destroys superoxide anion radicals which are normally produced within the cells and which are toxic to biological systems. In Eptatretus stoutii (Pacific hagfish), this protein is Superoxide dismutase [Mn], mitochondrial.